A 377-amino-acid chain; its full sequence is MKIDYYEALGVERTADDKVLKTAFRKLAMEYHPDRNPNNPEAERKFKEIGEAYETLKDPQKRAAYDRFGHAAFENGGMGGGFGNGFGGSGGFADIFEDIFGEMMGGGRRRSNGGRERGADLRYNMEVTLEEAYAGKTAQIRVPTSITCDECSGSGAKAGSQPTTCTMCSGSGRVRAAQGFFSVERTCPTCNGRGQIIKDPCGKCHGQGRVTQERSLSVNIPAGIEDGTRIRLSGEGEAGMRGGPSGDLYIFLSVKPHEFFQRDGSDLYCKVPISMTTAALGGQFEVSTLDGTQTRVKVPDGTQNGKQFRLKGKGMPVLRQAAVGDLYIQIDIETPQNLSKRQRELLEEFEKLSSQENSPKSAGFFSRMKEFFEGIGE.

One can recognise a J domain in the interval 4–69 (DYYEALGVER…QKRAAYDRFG (66 aa)). A CR-type zinc finger spans residues 135-213 (GKTAQIRVPT…CHGQGRVTQE (79 aa)). 8 residues coordinate Zn(2+): Cys148, Cys151, Cys165, Cys168, Cys187, Cys190, Cys201, and Cys204. CXXCXGXG motif repeat units lie at residues 148–155 (CDECSGSG), 165–172 (CTMCSGSG), 187–194 (CPTCNGRG), and 201–208 (CGKCHGQG).

It belongs to the DnaJ family. As to quaternary structure, homodimer. Zn(2+) serves as cofactor.

The protein resides in the cytoplasm. Participates actively in the response to hyperosmotic and heat shock by preventing the aggregation of stress-denatured proteins and by disaggregating proteins, also in an autonomous, DnaK-independent fashion. Unfolded proteins bind initially to DnaJ; upon interaction with the DnaJ-bound protein, DnaK hydrolyzes its bound ATP, resulting in the formation of a stable complex. GrpE releases ADP from DnaK; ATP binding to DnaK triggers the release of the substrate protein, thus completing the reaction cycle. Several rounds of ATP-dependent interactions between DnaJ, DnaK and GrpE are required for fully efficient folding. Also involved, together with DnaK and GrpE, in the DNA replication of plasmids through activation of initiation proteins. This is Chaperone protein DnaJ from Brucella anthropi (strain ATCC 49188 / DSM 6882 / CCUG 24695 / JCM 21032 / LMG 3331 / NBRC 15819 / NCTC 12168 / Alc 37) (Ochrobactrum anthropi).